Consider the following 895-residue polypeptide: MNKHHPKLRSFYSIRKSTLGVASVIVSTLFLITSQHQAQAAENTNTSDKISENQNNNATTTQPPKDTNQTQPATQPANTAKNYPAADESLKDAIKDPALENKEHDIGPREQVNFQLLDKNNETQYYHFFSIKDPADVYYTKKKAEVELDINTASTWKKFEVYENNQKLPVRLVSYSPVPEDHAYIRFPVSDGTQELKIVSSTQIDDGEETNYDYTKLVFAKPIYNDPSLVKSDTNDAVVTNDQSSSVASNQTNTNTSNQNISTINNANNQPQATTNMSQPAQPKSSTNADQASSQPAHETNSNGNTNDKTNESSNQSDVNQQYPPADESLQDAIKNPAIIDKEHTADNWRPIDFQMKNDKGERQFYHYASTVEPATVIFTKTGPIIELGLKTASTWKKFEVYEGDKKLPVELVSYDSDKDYAYIRFPVSNGTREVKIVSSIEYGENIHEDYDYTLMVFAQPITNNPDDYVDEETYNLQKLLAPYHKAKTLERQVYELEKLQEKLPEKYKAEYKKKLDQTRVELADQVKSAVTEFENVTPTNDQLTDLQEAHFVVFESEENSESVMDGFVEHPFYTATLNGQKYVVMKTKDDSYWKDLIVEGKRVTTVSKDPKNNSRTLIFPYIPDKAVYNAIVKVVVANIGYEGQYHVRIINQDINTKDDDTSQNNTSEPLNVQTGQEGKVADTDVAENSSTATNPKDASDKADVIEPESDVVKDADNNIDKDVQHDVDHLSDMSDNNHFDKYDLKEMDTQIAKDTDRNVDKDADNSVGMSSNVDTDKDSNKNKDKVIQLNHIADKNNHTGKAAKLDVVKQNYNNTDKVTDKKTTEHLPSDIHKTVDKTVKTKEKAGTPSKENKLSQSKMLPKTGETTSSQSWWGLYALLGMLALFIPKFRKESK.

The signal sequence occupies residues 1 to 40 (MNKHHPKLRSFYSIRKSTLGVASVIVSTLFLITSQHQAQA). The tract at residues 42-85 (ENTNTSDKISENQNNNATTTQPPKDTNQTQPATQPANTAKNYPA) is disordered. Residues 53–62 (NQNNNATTTQ) are compositionally biased toward low complexity. Polar residues predominate over residues 63-81 (PPKDTNQTQPATQPANTAK). One can recognise an NEAT 1 domain in the interval 105–232 (DIGPREQVNF…IYNDPSLVKS (128 aa)). The segment at 241–324 (NDQSSSVASN…NQSDVNQQYP (84 aa)) is disordered. A compositionally biased stretch (low complexity) spans 243–276 (QSSSVASNQTNTNTSNQNISTINNANNQPQATTN). Polar residues predominate over residues 277–323 (MSQPAQPKSSTNADQASSQPAHETNSNGNTNDKTNESSNQSDVNQQY). NEAT domains follow at residues 345 to 471 (TADN…DYVD) and 543 to 660 (QLTD…TKDD). 3 disordered regions span residues 657-720 (TKDD…DNNI), 751-782 (QIAK…DSNK), and 841-868 (KTKE…GETT). Polar residues-rich tracts occupy residues 663–677 (SQNN…QTGQ) and 687–697 (AENSSTATNPK). Basic and acidic residues-rich tracts occupy residues 698-720 (DASD…DNNI), 751-765 (QIAK…KDAD), and 841-854 (KTKE…KENK). Polar residues predominate over residues 855–868 (LSQSKMLPKTGETT). The short motif at 861–865 (LPKTG) is the LPXTG sorting signal element. T864 is modified (pentaglycyl murein peptidoglycan amidated threonine). The propeptide at 865–895 (GETTSSQSWWGLYALLGMLALFIPKFRKESK) is removed by sortase.

It belongs to the IsdH family.

It is found in the secreted. Its subcellular location is the cell wall. Binds human plasma haptoglobin-hemoglobin complexes, haptoglobin and hemoglobin. Binds haptoglobin-hemoglobin complexes with significantly higher affinity than haptoglobin alone. The protein is Iron-regulated surface determinant protein H (isdH) of Staphylococcus aureus (strain NCTC 8325 / PS 47).